The following is a 118-amino-acid chain: Small ribosomal subunit protein uS13 (118 aa).

Residues 94–118 form a disordered region; it reads GLPVRGQRTKTNARTRKGPRKPIKK.

This sequence belongs to the universal ribosomal protein uS13 family. Part of the 30S ribosomal subunit. Forms a loose heterodimer with protein S19. Forms two bridges to the 50S subunit in the 70S ribosome.

Its function is as follows. Located at the top of the head of the 30S subunit, it contacts several helices of the 16S rRNA. In the 70S ribosome it contacts the 23S rRNA (bridge B1a) and protein L5 of the 50S subunit (bridge B1b), connecting the 2 subunits; these bridges are implicated in subunit movement. Contacts the tRNAs in the A and P-sites. This Tolumonas auensis (strain DSM 9187 / NBRC 110442 / TA 4) protein is Small ribosomal subunit protein uS13.